The following is a 239-amino-acid chain: tRNA (guanine-N(7)-)-methyltransferase (239 aa).

The S-adenosyl-L-methionine site is built by E69, E94, D121, and D144. D144 is an active-site residue. Residue K148 coordinates substrate. The interaction with RNA stretch occupies residues 150–155 (RHNKRR). Substrate-binding positions include D180 and 217-220 (TKFE).

This sequence belongs to the class I-like SAM-binding methyltransferase superfamily. TrmB family. In terms of assembly, monomer.

It carries out the reaction guanosine(46) in tRNA + S-adenosyl-L-methionine = N(7)-methylguanosine(46) in tRNA + S-adenosyl-L-homocysteine. Its pathway is tRNA modification; N(7)-methylguanine-tRNA biosynthesis. Catalyzes the formation of N(7)-methylguanine at position 46 (m7G46) in tRNA. This chain is tRNA (guanine-N(7)-)-methyltransferase, found in Salmonella paratyphi A (strain ATCC 9150 / SARB42).